Consider the following 591-residue polypeptide: Aspartate--tRNA ligase (591 aa).

Glu-173 contacts L-aspartate. Residues 197-200 (QLFK) are aspartate. Arg-219 is an L-aspartate binding site. ATP-binding positions include 219–221 (RDE) and Gln-228. His-446 is a binding site for L-aspartate. Glu-482 serves as a coordination point for ATP. Residue Arg-489 participates in L-aspartate binding. 534 to 537 (GLDR) contacts ATP.

This sequence belongs to the class-II aminoacyl-tRNA synthetase family. Type 1 subfamily. Homodimer.

The protein resides in the cytoplasm. It carries out the reaction tRNA(Asp) + L-aspartate + ATP = L-aspartyl-tRNA(Asp) + AMP + diphosphate. Functionally, catalyzes the attachment of L-aspartate to tRNA(Asp) in a two-step reaction: L-aspartate is first activated by ATP to form Asp-AMP and then transferred to the acceptor end of tRNA(Asp). This Limosilactobacillus fermentum (strain NBRC 3956 / LMG 18251) (Lactobacillus fermentum) protein is Aspartate--tRNA ligase.